The chain runs to 210 residues: Superoxide dismutase [Mn], mitochondrial (210 aa).

Positions 29, 77, 164, and 168 each coordinate Mn(2+).

The protein belongs to the iron/manganese superoxide dismutase family. In terms of assembly, homotetramer. Requires Mn(2+) as cofactor.

It is found in the mitochondrion matrix. The enzyme catalyses 2 superoxide + 2 H(+) = H2O2 + O2. Functionally, destroys superoxide anion radicals which are normally produced within the cells and which are toxic to biological systems. In Aspergillus oryzae (strain ATCC 42149 / RIB 40) (Yellow koji mold), this protein is Superoxide dismutase [Mn], mitochondrial (sodB).